Reading from the N-terminus, the 399-residue chain is MSKGKLSERISHFNIVEELKSKGLYAYFRPIQSKQDTEVMIDGKRVLMFGSNSYLGLTIDPRIIEAAQDALSKYGTGCAGSRFLNGTLDIHIELEHKLSQLVGKEASILFSTGFQSNLGPISCLMGRNDYILLDERDHASIIDGSRLSFSKVIKYGHNDMDDLRAKLSRLPSESAKLIVTDGIFSMEGDIVNLPEMVKIADEYDAALMVDDAHSLGVIGEHGAGTASHFGLTDKVDLIMGTFSKSLASLGGFVAGDADVIDYLKHNARSVMFSASMTPASVASTLKALEIMISEPEHMENLWKNTNYAKQQLLESGFDLGATESPILPIFIRNNEKTFWVTKMLQDDGVFVNPVVSPAVPSEESLIRFSLMATHTFDQIDEAVEKMVRVFKQAEIESLI.

Pyridoxal 5'-phosphate contacts are provided by residues 113–114, histidine 213, threonine 241, and serine 243; that span reads GF. Lysine 244 bears the N6-(pyridoxal phosphate)lysine mark.

The protein belongs to the class-II pyridoxal-phosphate-dependent aminotransferase family. Homodimer. Requires pyridoxal 5'-phosphate as cofactor.

It is found in the cytoplasm. It catalyses the reaction L-serine + hexadecanoyl-CoA + H(+) = 3-oxosphinganine + CO2 + CoA. It participates in lipid metabolism; sphingolipid metabolism. Functionally, catalyzes the condensation of L-serine with palmitoyl-CoA (hexadecanoyl-CoA) to produce 3-oxosphinganine. This is Serine palmitoyltransferase from Sphingobacterium spiritivorum (Flavobacterium spiritivorum).